A 485-amino-acid chain; its full sequence is Aldehyde dehydrogenase family 3 member A2 (485 aa).

At 1-463 the chain is on the cytoplasmic side; sequence MELEVRRVRQ…FLLKRFNKEK (463 aa). Residue 185–190 participates in NAD(+) binding; the sequence is GNTAVG. Active-site residues include E207 and C241. S293 carries the post-translational modification Phosphoserine. The chain crosses the membrane as a helical span at residues 464-484; that stretch reads LGLLLLTFLGIVAAVLVKAEY. The Prevents secretion from ER signature appears at 481–484; it reads KAEY.

The protein belongs to the aldehyde dehydrogenase family. Homodimer.

It is found in the microsome membrane. Its subcellular location is the endoplasmic reticulum membrane. The enzyme catalyses an aldehyde + NAD(+) + H2O = a carboxylate + NADH + 2 H(+). It carries out the reaction a fatty aldehyde + NAD(+) + H2O = a fatty acid + NADH + 2 H(+). The catalysed reaction is (2E)-hexadecenal + NAD(+) + H2O = (E)-hexadec-2-enoate + NADH + 2 H(+). It catalyses the reaction hexadecanoate + NADH + 2 H(+) = hexadecanal + NAD(+) + H2O. The enzyme catalyses 22-oxodocosanoate + NAD(+) + H2O = docosanedioate + NADH + 2 H(+). It carries out the reaction 2,6,10,14-tetramethylpentadecanal + NAD(+) + H2O = 2,6,10,14-tetramethylpentadecanoate + NADH + 2 H(+). The catalysed reaction is octadecanal + NAD(+) + H2O = octadecanoate + NADH + 2 H(+). It catalyses the reaction dodecanoate + NADH + 2 H(+) = dodecanal + NAD(+) + H2O. The enzyme catalyses decanal + NAD(+) + H2O = decanoate + NADH + 2 H(+). It carries out the reaction tetradecanal + NAD(+) + H2O = tetradecanoate + NADH + 2 H(+). The catalysed reaction is octanal + NAD(+) + H2O = octanoate + NADH + 2 H(+). It catalyses the reaction heptanal + NAD(+) + H2O = heptanoate + NADH + 2 H(+). The enzyme catalyses (2E,6E)-farnesal + NAD(+) + H2O = (2E,6E)-farnesoate + NADH + 2 H(+). Catalyzes the oxidation of medium and long-chain aliphatic aldehydes to fatty acids. Active on a variety of saturated and unsaturated aliphatic aldehydes between 6 and 24 carbons in length. Responsible for conversion of the sphingosine 1-phosphate (S1P) degradation product hexadecenal to hexadecenoic acid. This is Aldehyde dehydrogenase family 3 member A2 (ALDH3A2) from Pongo abelii (Sumatran orangutan).